The following is a 271-amino-acid chain: MILEKIVETTKDRINQEKRRLPEEVIKKSATEMAIKQGFGSSSSISRDKFFFEEVMSRPGVNFLCEIKRASPSKGMIAKDFDPVFIAKEYEEGGAAAISVLTEPTFFLGKDDYLMEVKKEVGIPVLRKDFILEAYQIYQAKLLGADCVLLIVSILTEEQLTGFLKICDELGLSALVETHNQEEVMRALQCGARIIGVNNRNLSTFEVSIENSLKLRTLVPKEAIFIAESGISTPEQIKELKEAGVNGVLIGETLMKASNKKLMIRNLKSLL.

The protein belongs to the TrpC family.

The enzyme catalyses 1-(2-carboxyphenylamino)-1-deoxy-D-ribulose 5-phosphate + H(+) = (1S,2R)-1-C-(indol-3-yl)glycerol 3-phosphate + CO2 + H2O. Its pathway is amino-acid biosynthesis; L-tryptophan biosynthesis; L-tryptophan from chorismate: step 4/5. The polypeptide is Indole-3-glycerol phosphate synthase (Lachnoclostridium phytofermentans (strain ATCC 700394 / DSM 18823 / ISDg) (Clostridium phytofermentans)).